Consider the following 459-residue polypeptide: Protein ABHD15 (459 aa).

Residues M1–G28 form the signal peptide. Active-site charge relay system residues include D351 and H382. At S425 the chain carries Phosphoserine.

This sequence belongs to the AB hydrolase superfamily. AB hydrolase 4 family. As to quaternary structure, interacts with PDE3B; this interaction regulates PDE3B's stability and expression and, thereby, impacts the antilipolytic action of insulin. As to expression, mainly expressed in adipocytes and adipose depots, followed by a weak expression in liver and pancreas. In white adipose tissue (WAT), only expressed in mature adipocytes and primary adipocytes differentiated from stromal vascular cells (SVCs), but not in undifferentiated SVCs.

It is found in the secreted. May regulate adipocyte lipolysis and liver lipid accumulation. This Mus musculus (Mouse) protein is Protein ABHD15.